The chain runs to 293 residues: N-acetylneuraminate lyase (293 aa).

Aceneuramate contacts are provided by Ser-47, Thr-48, and Tyr-136. Catalysis depends on Tyr-136, which acts as the Proton donor. The Schiff-base intermediate with substrate role is filled by Lys-164. Aceneuramate-binding residues include Thr-166, Gly-188, Asp-190, Glu-191, Ser-207, and Tyr-251.

Belongs to the DapA family. NanA subfamily. In terms of assembly, homotetramer.

The protein localises to the cytoplasm. It carries out the reaction aceneuramate = aldehydo-N-acetyl-D-mannosamine + pyruvate. It functions in the pathway amino-sugar metabolism; N-acetylneuraminate degradation; D-fructose 6-phosphate from N-acetylneuraminate: step 1/5. Catalyzes the reversible aldol cleavage of N-acetylneuraminic acid (sialic acid; Neu5Ac) to form pyruvate and N-acetylmannosamine (ManNAc) via a Schiff base intermediate. This Pasteurella multocida (strain Pm70) protein is N-acetylneuraminate lyase.